Reading from the N-terminus, the 150-residue chain is Ribosome maturation factor RimP (150 aa).

Belongs to the RimP family.

Its subcellular location is the cytoplasm. Functionally, required for maturation of 30S ribosomal subunits. The sequence is that of Ribosome maturation factor RimP from Francisella tularensis subsp. mediasiatica (strain FSC147).